A 526-amino-acid chain; its full sequence is Peptide chain release factor 3 (526 aa).

A tr-type G domain is found at 9–277; that stretch reads DKRRTFAIIS…GIVEWAPIPQ (269 aa). Residues 18-25, 86-90, and 140-143 each bind GTP; these read SHPDAGKT, DTPGH, and NKLD.

Belongs to the TRAFAC class translation factor GTPase superfamily. Classic translation factor GTPase family. PrfC subfamily.

It is found in the cytoplasm. Increases the formation of ribosomal termination complexes and stimulates activities of RF-1 and RF-2. It binds guanine nucleotides and has strong preference for UGA stop codons. It may interact directly with the ribosome. The stimulation of RF-1 and RF-2 is significantly reduced by GTP and GDP, but not by GMP. This Shewanella halifaxensis (strain HAW-EB4) protein is Peptide chain release factor 3.